Here is a 1197-residue protein sequence, read N- to C-terminus: PAN2-PAN3 deadenylation complex catalytic subunit PAN2 (1197 aa).

WD repeat units lie at residues 153-193 (DEAE…QKYT), 195-231 (EVPG…VEHE), 244-280 (VHGN…ATTP), and 328-367 (TVGP…TFNT). The segment at 368-485 (YSRETDFALP…IGREEEPHLY (118 aa)) is linker. Positions 486-919 (MVAKKYRKVT…VPAILYYARR (434 aa)) constitute a USP domain. The Exonuclease domain maps to 970-1142 (VGLDAEFVTL…EDARTALQLY (173 aa)). A divalent metal cation-binding residues include Asp-973, Glu-975, Asp-1082, and Asp-1134. Residues 1176–1197 (VPEPDSQSSPKHGAVFPPVLAL) form a disordered region.

This sequence belongs to the peptidase C19 family. PAN2 subfamily. In terms of assembly, forms a heterotrimer with an asymmetric homodimer of the regulatory subunit PAN3 to form the poly(A)-nuclease (PAN) deadenylation complex. It depends on a divalent metal cation as a cofactor.

The protein resides in the cytoplasm. It is found in the P-body. It localises to the nucleus. It catalyses the reaction Exonucleolytic cleavage of poly(A) to 5'-AMP.. With respect to regulation, positively regulated by the regulatory subunit PAN3. In terms of biological role, catalytic subunit of the poly(A)-nuclease (PAN) deadenylation complex, one of two cytoplasmic mRNA deadenylases involved in general and miRNA-mediated mRNA turnover. PAN specifically shortens poly(A) tails of RNA and the activity is stimulated by poly(A)-binding protein (PABP). PAN deadenylation is followed by rapid degradation of the shortened mRNA tails by the CCR4-NOT complex. Deadenylated mRNAs are then degraded by two alternative mechanisms, namely exosome-mediated 3'-5' exonucleolytic degradation, or deadenylation-dependent mRNA decaping and subsequent 5'-3' exonucleolytic degradation by XRN1. The sequence is that of PAN2-PAN3 deadenylation complex catalytic subunit PAN2 from Gallus gallus (Chicken).